Consider the following 164-residue polypeptide: Ribosome maturation factor RimM (164 aa).

The PRC barrel domain occupies 90 to 161; that stretch reads EGRYYVADII…EIIIKPVKTW (72 aa).

This sequence belongs to the RimM family. As to quaternary structure, binds ribosomal protein uS19.

The protein localises to the cytoplasm. An accessory protein needed during the final step in the assembly of 30S ribosomal subunit, possibly for assembly of the head region. Essential for efficient processing of 16S rRNA. May be needed both before and after RbfA during the maturation of 16S rRNA. It has affinity for free ribosomal 30S subunits but not for 70S ribosomes. The chain is Ribosome maturation factor RimM from Clostridium tetani (strain Massachusetts / E88).